Consider the following 286-residue polypeptide: ATP synthase gamma chain (286 aa).

Belongs to the ATPase gamma chain family. As to quaternary structure, F-type ATPases have 2 components, CF(1) - the catalytic core - and CF(0) - the membrane proton channel. CF(1) has five subunits: alpha(3), beta(3), gamma(1), delta(1), epsilon(1). CF(0) has three main subunits: a, b and c.

It localises to the cell inner membrane. Functionally, produces ATP from ADP in the presence of a proton gradient across the membrane. The gamma chain is believed to be important in regulating ATPase activity and the flow of protons through the CF(0) complex. In Pseudoalteromonas translucida (strain TAC 125), this protein is ATP synthase gamma chain.